A 97-amino-acid polypeptide reads, in one-letter code: Large ribosomal subunit protein bL28 (97 aa).

It belongs to the bacterial ribosomal protein bL28 family.

The chain is Large ribosomal subunit protein bL28 from Rickettsia canadensis (strain McKiel).